The sequence spans 242 residues: Biosynthetic peptidoglycan transglycosylase (242 aa).

Residues 19 to 39 (LMVVLAVFWGGGIALFSVAPV) traverse the membrane as a helical segment.

Belongs to the glycosyltransferase 51 family.

It localises to the cell inner membrane. The enzyme catalyses [GlcNAc-(1-&gt;4)-Mur2Ac(oyl-L-Ala-gamma-D-Glu-L-Lys-D-Ala-D-Ala)](n)-di-trans,octa-cis-undecaprenyl diphosphate + beta-D-GlcNAc-(1-&gt;4)-Mur2Ac(oyl-L-Ala-gamma-D-Glu-L-Lys-D-Ala-D-Ala)-di-trans,octa-cis-undecaprenyl diphosphate = [GlcNAc-(1-&gt;4)-Mur2Ac(oyl-L-Ala-gamma-D-Glu-L-Lys-D-Ala-D-Ala)](n+1)-di-trans,octa-cis-undecaprenyl diphosphate + di-trans,octa-cis-undecaprenyl diphosphate + H(+). The protein operates within cell wall biogenesis; peptidoglycan biosynthesis. Functionally, peptidoglycan polymerase that catalyzes glycan chain elongation from lipid-linked precursors. This is Biosynthetic peptidoglycan transglycosylase from Escherichia coli (strain SMS-3-5 / SECEC).